The sequence spans 345 residues: tRNA N6-adenosine threonylcarbamoyltransferase (345 aa).

Fe cation-binding residues include H111 and H115. Substrate contacts are provided by residues 134-138 (LVSGG), D167, G180, and N276. D304 lines the Fe cation pocket.

Belongs to the KAE1 / TsaD family. The cofactor is Fe(2+).

It is found in the cytoplasm. The enzyme catalyses L-threonylcarbamoyladenylate + adenosine(37) in tRNA = N(6)-L-threonylcarbamoyladenosine(37) in tRNA + AMP + H(+). Its function is as follows. Required for the formation of a threonylcarbamoyl group on adenosine at position 37 (t(6)A37) in tRNAs that read codons beginning with adenine. Is involved in the transfer of the threonylcarbamoyl moiety of threonylcarbamoyl-AMP (TC-AMP) to the N6 group of A37, together with TsaE and TsaB. TsaD likely plays a direct catalytic role in this reaction. This is tRNA N6-adenosine threonylcarbamoyltransferase from Alcanivorax borkumensis (strain ATCC 700651 / DSM 11573 / NCIMB 13689 / SK2).